A 303-amino-acid chain; its full sequence is Inosose dehydratase (303 aa).

Belongs to the IolE/MocC family. Requires glutathione as cofactor. Co(2+) is required as a cofactor. Mn(2+) serves as cofactor.

It catalyses the reaction scyllo-inosose = 3D-3,5/4-trihydroxycyclohexane-1,2-dione + H2O. It participates in polyol metabolism; myo-inositol degradation into acetyl-CoA; acetyl-CoA from myo-inositol: step 2/7. Functionally, catalyzes the dehydration of inosose (2-keto-myo-inositol, 2KMI or 2,4,6/3,5-pentahydroxycyclohexanone) to 3D-(3,5/4)-trihydroxycyclohexane-1,2-dione (D-2,3-diketo-4-deoxy-epi-inositol). The protein is Inosose dehydratase of Halalkalibacterium halodurans (strain ATCC BAA-125 / DSM 18197 / FERM 7344 / JCM 9153 / C-125) (Bacillus halodurans).